The following is a 286-amino-acid chain: B3 domain-containing protein REM11 (286 aa).

The TF-B3 1 DNA-binding region spans 1–70 (MAWNLAIITL…TPMLSLVSTQ (70 aa)). The disordered stretch occupies residues 68 to 114 (STQSTSHKSQKRECSKHSEKESISAVPSKGKKNRKARSNREERRDSS). Basic and acidic residues predominate over residues 78–89 (KRECSKHSEKES). The segment at residues 119-219 (NRFVTFTPED…RAQVCFYGVF (101 aa)) is a DNA-binding region (TF-B3 2).

The protein localises to the nucleus. The sequence is that of B3 domain-containing protein REM11 (REM11) from Arabidopsis thaliana (Mouse-ear cress).